Here is a 529-residue protein sequence, read N- to C-terminus: Bifunctional purine biosynthesis protein PurH (529 aa).

An MGS-like domain is found at 1–148 (MQQRRPVRRA…KNHKDVAIVV (148 aa)).

This sequence belongs to the PurH family.

It catalyses the reaction (6R)-10-formyltetrahydrofolate + 5-amino-1-(5-phospho-beta-D-ribosyl)imidazole-4-carboxamide = 5-formamido-1-(5-phospho-D-ribosyl)imidazole-4-carboxamide + (6S)-5,6,7,8-tetrahydrofolate. It carries out the reaction IMP + H2O = 5-formamido-1-(5-phospho-D-ribosyl)imidazole-4-carboxamide. It participates in purine metabolism; IMP biosynthesis via de novo pathway; 5-formamido-1-(5-phospho-D-ribosyl)imidazole-4-carboxamide from 5-amino-1-(5-phospho-D-ribosyl)imidazole-4-carboxamide (10-formyl THF route): step 1/1. It functions in the pathway purine metabolism; IMP biosynthesis via de novo pathway; IMP from 5-formamido-1-(5-phospho-D-ribosyl)imidazole-4-carboxamide: step 1/1. This chain is Bifunctional purine biosynthesis protein PurH, found in Citrobacter koseri (strain ATCC BAA-895 / CDC 4225-83 / SGSC4696).